The chain runs to 103 residues: UPF0145 protein EF_0241 (103 aa).

This sequence belongs to the UPF0145 family.

This Enterococcus faecalis (strain ATCC 700802 / V583) protein is UPF0145 protein EF_0241.